A 531-amino-acid polypeptide reads, in one-letter code: Transporter mfs1 (531 aa).

10 helical membrane passes run 83-103, 119-139, 158-178, 182-202, 214-234, 241-261, 325-345, 358-378, 398-418, and 424-444; these read LVVT…SAIF, VPVI…PLIF, LIVF…GVLL, FLAG…LADI, FWSL…AAMV, WQFW…TFFM, IYIG…PILF, LVYM…FIYL, ILII…WFGW, and VHWI…FLLF. N-linked (GlcNAc...) asparagine glycosylation is present at Asn-486. The chain crosses the membrane as a helical span at residues 496–516; it reads GWGSTILGVISCIMIPIPFLI.

The protein belongs to the major facilitator superfamily. CAR1 family.

It localises to the endoplasmic reticulum. It is found in the membrane. This is Transporter mfs1 (mfs1) from Schizosaccharomyces pombe (strain 972 / ATCC 24843) (Fission yeast).